We begin with the raw amino-acid sequence, 117 residues long: MQTIAQQITNIIEESLTDMGFELVLVKFKGVSPKVVEVLIDSLNGNKISIEDCTNVSRTISAILDVEDLIEEAYSLEVSSSGIERTLVKFENYNRFLGREVKIKLKELLNGKTLYPR.

It belongs to the RimP family.

It is found in the cytoplasm. Functionally, required for maturation of 30S ribosomal subunits. The sequence is that of Ribosome maturation factor RimP from Rickettsia prowazekii (strain Madrid E).